A 329-amino-acid chain; its full sequence is Sex comb on midleg-like protein 1 (329 aa).

The interval 125–194 is disordered; sequence NEVHESFSYP…SDFSEHNYQP (70 aa). S138 bears the Phosphoserine mark. Residues 159–168 show a composition bias toward basic and acidic residues; the sequence is FRMEEYQRAE. A Phosphoserine modification is found at S238. Residues 258-325 enclose the SAM domain; it reads WSVEAVVLFL…YYIDRLKQGK (68 aa).

The protein belongs to the SCM family. In terms of tissue distribution, highly expressed in testis and pancreas. Preferentially expressed in the germ stem cells of testis.

The protein resides in the nucleus. Putative Polycomb group (PcG) protein. PcG proteins act by forming multiprotein complexes, which are required to maintain the transcriptionally repressive state of homeotic genes throughout development. May be involved in spermatogenesis during sexual maturation. The polypeptide is Sex comb on midleg-like protein 1 (SCML1) (Macaca mulatta (Rhesus macaque)).